The sequence spans 595 residues: Sulfite reductase [NADPH] flavoprotein alpha-component (595 aa).

The region spanning 59–197 (ITVLSASQTG…KADIWRREIV (139 aa)) is the Flavodoxin-like domain. Residues 65–70 (SQTGNA), 112–115 (STQG), and 148–157 (LGDSSYTYFA) each bind FMN. The FAD-binding FR-type domain occupies 230–444 (EEPFTAHLVV…IEHNDNFRLP (215 aa)). Residues Thr318, Phe352, 382–385 (RLYS), 400–402 (TVS), Tyr406, and 415–418 (GGAS) each bind FAD. NADP(+)-binding positions include 515–516 (SQ), 521–525 (KIYVQ), and Asp557. Residue Tyr595 coordinates FAD.

This sequence belongs to the NADPH-dependent sulphite reductase flavoprotein subunit CysJ family. The protein in the N-terminal section; belongs to the flavodoxin family. In the C-terminal section; belongs to the flavoprotein pyridine nucleotide cytochrome reductase family. As to quaternary structure, alpha(8)-beta(8). The alpha component is a flavoprotein, the beta component is a hemoprotein. Requires FAD as cofactor. FMN serves as cofactor.

The catalysed reaction is hydrogen sulfide + 3 NADP(+) + 3 H2O = sulfite + 3 NADPH + 4 H(+). The protein operates within sulfur metabolism; hydrogen sulfide biosynthesis; hydrogen sulfide from sulfite (NADPH route): step 1/1. Component of the sulfite reductase complex that catalyzes the 6-electron reduction of sulfite to sulfide. This is one of several activities required for the biosynthesis of L-cysteine from sulfate. The flavoprotein component catalyzes the electron flow from NADPH -&gt; FAD -&gt; FMN to the hemoprotein component. This is Sulfite reductase [NADPH] flavoprotein alpha-component from Baumannia cicadellinicola subsp. Homalodisca coagulata.